The chain runs to 413 residues: uncharacterized protein (413 aa).

Residue lysine 265 is modified to N6-(pyridoxal phosphate)lysine.

This sequence belongs to the threonine aldolase family. Requires pyridoxal 5'-phosphate as cofactor.

This is an uncharacterized protein from Caenorhabditis elegans.